The primary structure comprises 478 residues: ATP synthase subunit beta (478 aa).

An ATP-binding site is contributed by 158–165; the sequence is GGAGVGKT.

The protein belongs to the ATPase alpha/beta chains family. F-type ATPases have 2 components, CF(1) - the catalytic core - and CF(0) - the membrane proton channel. CF(1) has five subunits: alpha(3), beta(3), gamma(1), delta(1), epsilon(1). CF(0) has three main subunits: a(1), b(2) and c(9-12). The alpha and beta chains form an alternating ring which encloses part of the gamma chain. CF(1) is attached to CF(0) by a central stalk formed by the gamma and epsilon chains, while a peripheral stalk is formed by the delta and b chains.

The protein resides in the cell inner membrane. The catalysed reaction is ATP + H2O + 4 H(+)(in) = ADP + phosphate + 5 H(+)(out). Its function is as follows. Produces ATP from ADP in the presence of a proton gradient across the membrane. The catalytic sites are hosted primarily by the beta subunits. The polypeptide is ATP synthase subunit beta (Rhizobium johnstonii (strain DSM 114642 / LMG 32736 / 3841) (Rhizobium leguminosarum bv. viciae)).